An 864-amino-acid polypeptide reads, in one-letter code: Leucine--tRNA ligase (864 aa).

Residues 42 to 52 carry the 'HIGH' region motif; sequence PYPSGKLHMGH. Residues 624-628 carry the 'KMSKS' region motif; sequence KMSKS. Lys-627 lines the ATP pocket.

It belongs to the class-I aminoacyl-tRNA synthetase family.

It is found in the cytoplasm. The enzyme catalyses tRNA(Leu) + L-leucine + ATP = L-leucyl-tRNA(Leu) + AMP + diphosphate. The protein is Leucine--tRNA ligase of Burkholderia lata (strain ATCC 17760 / DSM 23089 / LMG 22485 / NCIMB 9086 / R18194 / 383).